Consider the following 142-residue polypeptide: Hemoglobin subunit alpha (142 aa).

The 141-residue stretch at 2–142 (VLSAADKTNV…LSTVLTSKYR (141 aa)) folds into the Globin domain. A Phosphoserine modification is found at Ser-4. An N6-succinyllysine modification is found at Lys-8. Thr-9 is modified (phosphothreonine). Lys-12 bears the N6-succinyllysine mark. Lys-17 is modified (N6-acetyllysine; alternate). Lys-17 bears the N6-succinyllysine; alternate mark. Position 25 is a phosphotyrosine (Tyr-25). Ser-36 carries the phosphoserine modification. Lys-41 is modified (N6-succinyllysine). Ser-50 is subject to Phosphoserine. Gln-59 serves as a coordination point for O2. His-88 is a binding site for heme b. A Phosphothreonine modification is found at Thr-109. The residue at position 125 (Ser-125) is a Phosphoserine. Thr-135 and Thr-138 each carry phosphothreonine. At Ser-139 the chain carries Phosphoserine.

Belongs to the globin family. In terms of assembly, heterotetramer of two alpha chains and two beta chains. In terms of tissue distribution, red blood cells.

Functionally, involved in oxygen transport from the lung to the various peripheral tissues. Hemopressin acts as an antagonist peptide of the cannabinoid receptor CNR1. Hemopressin-binding efficiently blocks cannabinoid receptor CNR1 and subsequent signaling. In Monodelphis domestica (Gray short-tailed opossum), this protein is Hemoglobin subunit alpha (HBA).